Here is a 957-residue protein sequence, read N- to C-terminus: Glutamyl aminopeptidase (957 aa).

Residues 1–18 (MNFAEREGSKRYCIQTKH) lie on the Cytoplasmic side of the membrane. The chain crosses the membrane as a helical; Signal-anchor for type II membrane protein span at residues 19–39 (VAILCAVVVGVGLIVGLAVGL). Over 40–957 (TRSCDSSGDG…EWFFNLLESG (918 aa)) the chain is Extracellular. The tract at residues 44-83 (DSSGDGGPGTAPAPSHLPSSTASPSGPPAQDQDICPASED) is disordered. Asn98 carries N-linked (GlcNAc...) asparagine; atypical glycosylation. Asn124 and Asn197 each carry an N-linked (GlcNAc...) asparagine glycan. Glu223 provides a ligand contact to substrate. 2 N-linked (GlcNAc...) asparagine glycosylation sites follow: Asn324 and Asn340. A substrate-binding site is contributed by 357-361 (GAMEN). Zn(2+) is bound at residue His393. Glu394 functions as the Proton acceptor in the catalytic mechanism. 2 residues coordinate Zn(2+): His397 and Glu416. N-linked (GlcNAc...) asparagine glycans are attached at residues Asn554, Asn589, Asn597, Asn607, Asn678, Asn763, Asn773, Asn801, and Asn828. A substrate-binding site is contributed by Arg887.

This sequence belongs to the peptidase M1 family. As to quaternary structure, homodimer; disulfide-linked. Zn(2+) serves as cofactor. In terms of tissue distribution, expressed in choriocarcinoma cancer cell lines (at protein level). Expressed by epithelial cells of the proximal tubule cells and the glomerulus of the nephron. Also found in a variety of other tissues.

Its subcellular location is the cell membrane. The catalysed reaction is Release of N-terminal glutamate (and to a lesser extent aspartate) from a peptide.. Substrate specificity is modulated by calcium which enhances the enzymatic activity for cleavage of acidic residues while reducing its activity with basic residues. Inhibited by aminopeptidase inhibitors amastatin and bestatin. In terms of biological role, regulates central hypertension through its calcium-modulated preference to cleave N-terminal acidic residues from peptides such as angiotensin II. The protein is Glutamyl aminopeptidase (ENPEP) of Homo sapiens (Human).